A 247-amino-acid polypeptide reads, in one-letter code: DNA polymerase sliding clamp 1 (247 aa).

It belongs to the PCNA family. As to quaternary structure, heterotrimer. The subunits circularize to form a toroid; DNA passes through its center. Replication factor C (RFC) is required to load the toroid on the DNA.

Functionally, sliding clamp subunit that acts as a moving platform for DNA processing. Responsible for tethering the catalytic subunit of DNA polymerase and other proteins to DNA during high-speed replication. In Aeropyrum pernix (strain ATCC 700893 / DSM 11879 / JCM 9820 / NBRC 100138 / K1), this protein is DNA polymerase sliding clamp 1.